A 697-amino-acid chain; its full sequence is Elongation factor G 2 (697 aa).

Residues 5–280 enclose the tr-type G domain; that stretch reads SKYRNIGIFA…AVVDYLPAPD (276 aa). Residues 14 to 21, 78 to 82, and 132 to 135 contribute to the GTP site; these read AHVDAGKT, DTPGH, and NKLD.

This sequence belongs to the TRAFAC class translation factor GTPase superfamily. Classic translation factor GTPase family. EF-G/EF-2 subfamily.

The protein resides in the cytoplasm. In terms of biological role, catalyzes the GTP-dependent ribosomal translocation step during translation elongation. During this step, the ribosome changes from the pre-translocational (PRE) to the post-translocational (POST) state as the newly formed A-site-bound peptidyl-tRNA and P-site-bound deacylated tRNA move to the P and E sites, respectively. Catalyzes the coordinated movement of the two tRNA molecules, the mRNA and conformational changes in the ribosome. In Shewanella sp. (strain MR-7), this protein is Elongation factor G 2.